The chain runs to 1298 residues: MLILRGAPALSAFRHSKLLEQLKQKVSAVSGLYAEFAHFADVNDVLTSEEQQVLDRLLKYGPSVPVQEPSGRLFLVLPRFGTISPWSSKASDIARNCGLSKIQRLERGIAFYVEGQFSETEAQAIADSLHDRMTQLVLGDLEQAANLFSHAQPKPLTAVDILGGGRAALEKANVELGLALAEDEIDYLITSFNGLGRNPHDIELMMFAQANSEHCRHKIFNASWDIDGQSQEKSLFGMIKNTYQMHSEGVLSAYKDNASVIVGNVAGRFFPDPETRQYGAVQEPVHILMKVETHNHPTAIAPFPGAATGSGGEIRDEGATGRGAKPKAGLTGFTVSNLQIPGFVQPWEVPYGKPERIVTALDIMIEGPLGGAAFNNEFGRPALTGYFRTFEQSITTPHGDEVRGYHKPIMLAGGMGNIREDHVQKGEITVGSKLIVLGGPAMLIGLGGGAASSMATGTSSADLDFASVQRENPEMERRCQEVIDRCWQLGDRNPISFIHDVGAGGLSNAFPELVNDGDRGGRFELRNVPNDEPGMAPLEIWSNESQERYVLAVGVEDFERFKAICERERCPFAVVGEATAEPQLTVTDSHFGNSPVDMPLEVLLGKAPRMHRSVAREEEIGDDFDPSTLDIEESVQRVLRHPAVASKSFLITIGDRSITGLVARDQMVGPWQVPVADCAVTATSFDVNTGEAMAMGERTPLALLDAPASGRMAIGETLTNIAASLIEKLSDIKLSANWMSAAGHPGEDARLYDTVKAVGMELCPELGITIPVGKDSMSMKTRWSDEGTEKSVTSPLSLIVTGFAPVVDIRQTLTPELRMDKGITDLILIDLGRGQNRMGASILAQTHGKLGRVAPDVDDAEDLKAFFAVIQGLNSDGHILSYHDRSDGGLLVSTLEMAFAGHCGLNLHLDGVADNVSELSAILFNEELGAVIQVRQDATPLVLAQFSAAGLEDCVAVIGQPINNDEVSISFHGEPVFSGQRRLLQRQWAETSYQIQRLRDNAECADQEFDALLEEDNPGLTVKLGFDVNDDIAAPYIKTGVRPQVAVLREQGVNGQVEMAAAFDRAGFNAIDVHMSDILAGRVDLNDFKGMVACGGFSYGDVLGAGEGWAKSALFNSRARDAFQGFFERSDSFTLGVCNGCQMLSNLHELIPGSEFWPHFVRNRSEQFEARVAMVQVQESASIFLQGMAGSRMPIAIAHGEGHAEFRNDDALLEADVSGTVALRFVDNHGKVTETYPANPNGSPRGIGGMTTLDGRVTIMMPHPERVFRAVQNSWRPEDWNEDGAWMRMFRNARAWVN.

The disordered stretch occupies residues 303–327; it reads FPGAATGSGGEIRDEGATGRGAKPK. Residues 305–316, 384–386, and Ala-676 contribute to the ATP site; these read GAATGSGGEIRD and TGY. Mg(2+) contacts are provided by Asp-677, Glu-716, Asn-720, and Asp-884. Residue Ser-886 participates in ATP binding. Residues 1045 to 1298 enclose the Glutamine amidotransferase type-1 domain; sequence VAVLREQGVN…MFRNARAWVN (254 aa). Catalysis depends on Cys-1138, which acts as the Nucleophile. Residues His-1263 and Glu-1265 contribute to the active site.

In the N-terminal section; belongs to the FGAMS family. Monomer.

It localises to the cytoplasm. It carries out the reaction N(2)-formyl-N(1)-(5-phospho-beta-D-ribosyl)glycinamide + L-glutamine + ATP + H2O = 2-formamido-N(1)-(5-O-phospho-beta-D-ribosyl)acetamidine + L-glutamate + ADP + phosphate + H(+). It participates in purine metabolism; IMP biosynthesis via de novo pathway; 5-amino-1-(5-phospho-D-ribosyl)imidazole from N(2)-formyl-N(1)-(5-phospho-D-ribosyl)glycinamide: step 1/2. Its function is as follows. Phosphoribosylformylglycinamidine synthase involved in the purines biosynthetic pathway. Catalyzes the ATP-dependent conversion of formylglycinamide ribonucleotide (FGAR) and glutamine to yield formylglycinamidine ribonucleotide (FGAM) and glutamate. The chain is Phosphoribosylformylglycinamidine synthase from Pseudomonas syringae pv. syringae (strain B728a).